Here is a 416-residue protein sequence, read N- to C-terminus: Tyrosine--tRNA ligase (416 aa).

An L-tyrosine-binding site is contributed by Y34. Residues 39–48 carry the 'HIGH' region motif; it reads PTGDSLHIGH. L-tyrosine contacts are provided by Y165 and Q169. Positions 227 to 231 match the 'KMSKS' region motif; that stretch reads KFGKT. Residue K230 participates in ATP binding. Residues 349–416 enclose the S4 RNA-binding domain; that stretch reads KNIVEWLVDT…KKKYFLARVK (68 aa).

The protein belongs to the class-I aminoacyl-tRNA synthetase family. TyrS type 1 subfamily. As to quaternary structure, homodimer.

It is found in the cytoplasm. The enzyme catalyses tRNA(Tyr) + L-tyrosine + ATP = L-tyrosyl-tRNA(Tyr) + AMP + diphosphate + H(+). Functionally, catalyzes the attachment of tyrosine to tRNA(Tyr) in a two-step reaction: tyrosine is first activated by ATP to form Tyr-AMP and then transferred to the acceptor end of tRNA(Tyr). This chain is Tyrosine--tRNA ligase, found in Ligilactobacillus salivarius (strain UCC118) (Lactobacillus salivarius).